The following is a 219-amino-acid chain: Alpha N-terminal protein methyltransferase 1 (219 aa).

Residues G64, R69, 111-112 (LQ), and Q127 contribute to the S-adenosyl-L-methionine site.

Belongs to the methyltransferase superfamily. NTM1 family.

It is found in the cytoplasm. It carries out the reaction N-terminal L-alanyl-L-prolyl-L-lysyl-[protein] + 3 S-adenosyl-L-methionine = N-terminal N,N,N-trimethyl-L-alanyl-L-prolyl-L-lysyl-[protein] + 3 S-adenosyl-L-homocysteine + 3 H(+). The catalysed reaction is N-terminal L-seryl-L-prolyl-L-lysyl-[protein] + 3 S-adenosyl-L-methionine = N-terminal N,N,N-trimethyl-L-seryl-L-prolyl-L-lysyl-[protein] + 3 S-adenosyl-L-homocysteine + 3 H(+). It catalyses the reaction N-terminal L-prolyl-L-prolyl-L-lysyl-[protein] + 2 S-adenosyl-L-methionine = N-terminal N,N-dimethyl-L-prolyl-L-prolyl-L-lysyl-[protein] + 2 S-adenosyl-L-homocysteine + 2 H(+). Alpha-N-methyltransferase that methylates the N-terminus of target proteins containing the N-terminal motif [Ala/Pro/Ser]-Pro-Lys when the initiator Met is cleaved. Specifically catalyzes mono-, di- or tri-methylation of exposed alpha-amino group of Ala or Ser residue in the [Ala/Ser]-Pro-Lys motif and mono- or di-methylation of Pro in the Pro-Pro-Lys motif. The protein is Alpha N-terminal protein methyltransferase 1 (tae1) of Schizosaccharomyces pombe (strain 972 / ATCC 24843) (Fission yeast).